The sequence spans 441 residues: Importin subunit alpha-8 (441 aa).

8 ARM repeats span residues 39–79, 80–118, 121–158, 160–199, 202–241, 244–284, 287–326, and 330–370; these read QRDI…NIAV, DNPG…NVAG, IHYR…NLCR, KPHP…HLSE, EDGI…AMTA, HQQT…NITA, KEQI…NMAL, and HDQI…NMLK.

This sequence belongs to the importin alpha family. As to quaternary structure, forms a complex with importin subunit beta-1.

Its subcellular location is the nucleus envelope. In terms of biological role, binds to conventional NLS motifs and mediates nuclear protein import across the nuclear envelope. This chain is Importin subunit alpha-8, found in Arabidopsis thaliana (Mouse-ear cress).